Consider the following 113-residue polypeptide: Crustacean hyperglycemic hormones B (113 aa).

The N-terminal stretch at 1 to 26 is a signal peptide; the sequence is MVAFRMMSMALLVVVASSWWASPVEA. Disulfide bonds link Cys46-Cys82, Cys62-Cys78, and Cys65-Cys91. Val111 carries the valine amide modification.

It belongs to the arthropod CHH/MIH/GIH/VIH hormone family. Expressed at a constant level in the eyestalks of juveniles and mature females. A low level expression is seen in the central nervous system.

It localises to the secreted. Functionally, hormone found in the sinus gland of isopods and decapods which controls the blood sugar level. Has a secretagogue action over the amylase released from the midgut gland. May act as a stress hormone and may be involved in the control of molting and reproduction. The polypeptide is Crustacean hyperglycemic hormones B (Metapenaeus ensis (Greasyback shrimp)).